The following is a 426-amino-acid chain: Diaminobutyrate--2-oxoglutarate transaminase (426 aa).

N6-(pyridoxal phosphate)lysine is present on lysine 272.

The protein belongs to the class-III pyridoxal-phosphate-dependent aminotransferase family. The cofactor is pyridoxal 5'-phosphate.

It carries out the reaction L-2,4-diaminobutanoate + 2-oxoglutarate = L-aspartate 4-semialdehyde + L-glutamate. It functions in the pathway amine and polyamine biosynthesis; ectoine biosynthesis; L-ectoine from L-aspartate 4-semialdehyde: step 1/3. In terms of biological role, catalyzes reversively the conversion of L-aspartate beta-semialdehyde (ASA) to L-2,4-diaminobutyrate (DABA) by transamination with L-glutamate. This is Diaminobutyrate--2-oxoglutarate transaminase (ectB) from Sporosarcina pasteurii (Bacillus pasteurii).